Here is a 601-residue protein sequence, read N- to C-terminus: MPRQEHIRNFSIIAHIDHGKSTLADRILEVTGLVSDREKRDQYLDRMDLERERGITIKAQTVRIPFTSKTGRKYILNLIDTPGHVDFNYEVSRSLAACDGALLVVDASQGVEAQTLANVYLALDHDHDIIPVLNKIDLPSSDVDRVKAEIEESIGLDCTDAIAVSAKTGMNVDKVLEAIVERLPAPEGNLNAPLKALIFDSWYDSYQGVVVLFRVMDGVLRKGDRVRMFATEKSYEVIRLGVFSPDIVDVAELGAGEVGFLCANIKELGDAKVGDTITHTDRPASEPVPGFKEVQPMVFCGLYPTDAAEYEPLKASLEKLQLNDAAFSYEPETSQALGFGFRCGFLGLLHMEIIQERLEREFQVDLIATAPSVIYKVETVDGKTQDIDNPSKLPDPTRITSLYEPYVRMDIHVPNEFVGNVLKLCEEKRGIQKNMGYIAANRVVITYELPFAEIVFDFFDRLKSGTKGYASMDYEPVDYRESSLVRLDILINGEAVDALAVIVHRDKAYHYGRALALKLKRTIPRQLFEVAIQAAIGQKVIARETISAMRKNVTAKCYGGDITRKRKLLEKQKEGKRRMKRMGNVELPQEAFLAALQVGDE.

Residues 5–187 (EHIRNFSIIA…AIVERLPAPE (183 aa)) enclose the tr-type G domain. GTP contacts are provided by residues 17-22 (DHGKST) and 134-137 (NKID).

It belongs to the TRAFAC class translation factor GTPase superfamily. Classic translation factor GTPase family. LepA subfamily.

The protein localises to the cell inner membrane. It catalyses the reaction GTP + H2O = GDP + phosphate + H(+). In terms of biological role, required for accurate and efficient protein synthesis under certain stress conditions. May act as a fidelity factor of the translation reaction, by catalyzing a one-codon backward translocation of tRNAs on improperly translocated ribosomes. Back-translocation proceeds from a post-translocation (POST) complex to a pre-translocation (PRE) complex, thus giving elongation factor G a second chance to translocate the tRNAs correctly. Binds to ribosomes in a GTP-dependent manner. The sequence is that of Elongation factor 4 from Nitratidesulfovibrio vulgaris (strain ATCC 29579 / DSM 644 / CCUG 34227 / NCIMB 8303 / VKM B-1760 / Hildenborough) (Desulfovibrio vulgaris).